The following is a 327-amino-acid chain: GTPase Obg (327 aa).

The Obg domain occupies 1–159 (MQFIDQANII…WEVQLELKLL (159 aa)). The region spanning 160–327 (AEVGIIGLPN…PLLSEVWKRI (168 aa)) is the OBG-type G domain. ATP is bound by residues 166-173 (GLPNAGKS), 191-195 (FTTLI), 213-216 (DIPG), 280-283 (NKME), and 309-311 (SSS). 2 residues coordinate Mg(2+): Ser-173 and Thr-193.

The protein belongs to the TRAFAC class OBG-HflX-like GTPase superfamily. OBG GTPase family. As to quaternary structure, monomer. The cofactor is Mg(2+).

The protein resides in the cytoplasm. Its function is as follows. An essential GTPase which binds GTP, GDP and possibly (p)ppGpp with moderate affinity, with high nucleotide exchange rates and a fairly low GTP hydrolysis rate. Plays a role in control of the cell cycle, stress response, ribosome biogenesis and in those bacteria that undergo differentiation, in morphogenesis control. The chain is GTPase Obg from Prochlorococcus marinus subsp. pastoris (strain CCMP1986 / NIES-2087 / MED4).